Reading from the N-terminus, the 647-residue chain is Auxin efflux carrier component 2 (647 aa).

The Extracellular portion of the chain corresponds to 1 to 7 (MITGKDM). Residues 8-28 (YDVLAAMVPLYVAMILAYGSV) form a helical membrane-spanning segment. Topologically, residues 29 to 38 (RWWGIFTPDQ) are cytoplasmic. The chain crosses the membrane as a helical span at residues 39-59 (CSGINRFVAVFAVPLLSFHFI). Position 51 (V51) interacts with (indol-3-yl)acetate. The Extracellular portion of the chain corresponds to 60 to 68 (SSNDPYAMN). Residues 69-89 (YHFLAADSLQKVVILAALFLW) traverse the membrane as a helical segment. The Cytoplasmic segment spans residues 90–100 (QAFSRRGSLEW). The helical transmembrane segment at 101-121 (MITLFSLSTLPNTLVMGIPLL) threads the bilayer. (indol-3-yl)acetate-binding residues include N112 and L114. The Extracellular segment spans residues 122 to 131 (RAMYGDFSGN). A helical membrane pass occupies residues 132–152 (LMVQIVVLQSIIWYTLMLFLF). Y145 is a binding site for (indol-3-yl)acetate. The Cytoplasmic segment spans residues 153 to 507 (EFRGAKLLIS…LIRNPNTYSS (355 aa)). 3 positions are modified to phosphoserine: S237, S258, and S310. The interval 339 to 380 (SVPSYPPPNPMFTGSTSGASGVKKKESGGGGSGGGVGVGGQN) is disordered. At T354 the chain carries Phosphothreonine. Positions 366–378 (GGGGSGGGVGVGG) are enriched in gly residues. Phosphoserine is present on S393. Disordered regions lie at residues 397–420 (EANAKNAMTRGSSTDVSTDPKVSI) and 440–481 (PGRK…QQMP). A helical transmembrane segment spans residues 508 to 528 (LFGLAWSLVSFKWNIKMPTIM). Residues 529 to 531 (SGS) are Extracellular-facing. A helical membrane pass occupies residues 532-552 (ISILSDAGLGMAMFSLGLFMA). The Cytoplasmic segment spans residues 553–568 (LQPKIIACGKSVAGFA). Residues 569–589 (MAVRFLTGPAVIAATSIAIGI) form a helical membrane-spanning segment. The Extracellular segment spans residues 590 to 592 (RGD). Residues 593-613 (LLHIAIVQAALPQGIVPFVFA) form a helical membrane-spanning segment. (indol-3-yl)acetate-binding residues include I607 and V608. The Cytoplasmic portion of the chain corresponds to 614–626 (KEYNVHPDILSTA). A helical transmembrane segment spans residues 627–647 (VIFGMLVALPVTVLYYVLLGL).

Belongs to the auxin efflux carrier (TC 2.A.69.1) family. In terms of assembly, homodimer. Interacts with FYPP1 and FYPP3. Component of a complex made of PINs (e.g. PIN1 and PIN2), MAB4/MELs (e.g. NPY1/MAB4 and NPY5/MEL1) and AGC kinases (e.g. D6PK and PID) at the plasma membrane. Binds directly to NPY1/MAB4, NPY5/MEL1 and PID. Root-specific. Localized to the cortex, epidermis and lateral root cap, predominantly at the upper side of cells.

The protein localises to the cell membrane. Functionally, acts as a component of the auxin efflux carrier. Seems to be involved in the root-specific auxin transport, and mediates the root gravitropism. Its particular localization suggests a role in the translocation of auxin towards the elongation zone. Recrutes NPY proteins (e.g. NPY1/MAB4 and NPY5/MEL1) to the plasma membrane in a polar basal localization in root epidermis; this activity is optimized by AGC kinases-mediated (e.g. D6PK and PID) phosphorylation that limits their lateral diffusion-based escape. This chain is Auxin efflux carrier component 2, found in Arabidopsis thaliana (Mouse-ear cress).